A 501-amino-acid chain; its full sequence is Phosphatase and actin regulator 1 (501 aa).

Residues 1 to 18 (MRQSREELIKRGVLKEIF) form an RPEL 1 repeat. Disordered regions lie at residues 21–46 (DGEL…QVLS) and 295–329 (DNKE…EDNS). The span at 36-46 (GQPLGSGQVLS) shows a compositional bias: low complexity. A compositionally biased stretch (basic and acidic residues) spans 295 to 304 (DNKENVPHEA). Acidic residues predominate over residues 317–328 (EEEEEEDEDEDN). RPEL repeat units follow at residues 343–368 (DSLA…PMQT), 381–406 (TKLT…KPRN), and 419–444 (RRLT…IRFS). The disordered stretch occupies residues 382–415 (KLTRRLSQRPTAEELEQRNILKPRNEQEEQEEKR). A compositionally biased stretch (basic and acidic residues) spans 392–415 (TAEELEQRNILKPRNEQEEQEEKR).

Belongs to the phosphatase and actin regulator family. Interacts (via RPEL repeats) with ACTA1. As to expression, expressed in the gizzard, and in neurons from central and peripheral nervous systems.

It localises to the cytoplasm. Its subcellular location is the synapse. The protein localises to the nucleus. In terms of biological role, binds actin monomers (G actin) and plays a role in the reorganization of the actin cytoskeleton and in formation of actin stress fibers. This chain is Phosphatase and actin regulator 1 (PHACTR1), found in Gallus gallus (Chicken).